A 333-amino-acid chain; its full sequence is MSFNLRNRNFLKLLDFTGKEIEHLIALAQDLKHAKYAGTEQQKLKGKNIALIFEKTSTRTRCAFEVAAHDQGAHVTYIGGGSQMGHKESTKDTARVLGRFYDGIEYRGFGQDVVETLGEHAGVPVWNGLTDEWHPTQIIADWMTMLEHGNGKRLNQMKLAYMGDAKNNMGNSLMVGAAKVGMEIRLVGPKAYWPDPALVAECNELCKISGGKIVITDNVQEGVDSVDFIYGDVWVSMGEPEELWATRINDLAPYQVNMSVITATQNPAVKYMHCLPAFHNDETRVGKKIEEKFNMKGLEVTEDVFESSYTICFDEAENRMHSIKAIMVATLGD.

Carbamoyl phosphate contacts are provided by residues Ser57–Thr60, Gln83, Arg107, and His134–Gln137. Residues Asn168, Asp232, and Ser236–Met237 each bind L-ornithine. Carbamoyl phosphate contacts are provided by residues Cys274 to Leu275 and Arg319.

Belongs to the aspartate/ornithine carbamoyltransferase superfamily. OTCase family.

It is found in the cytoplasm. It catalyses the reaction carbamoyl phosphate + L-ornithine = L-citrulline + phosphate + H(+). It participates in amino-acid biosynthesis; L-arginine biosynthesis; L-arginine from L-ornithine and carbamoyl phosphate: step 1/3. Functionally, reversibly catalyzes the transfer of the carbamoyl group from carbamoyl phosphate (CP) to the N(epsilon) atom of ornithine (ORN) to produce L-citrulline. The polypeptide is Ornithine carbamoyltransferase (Photobacterium profundum (strain SS9)).